A 229-amino-acid chain; its full sequence is Octanoyltransferase (229 aa).

The BPL/LPL catalytic domain maps to 30 to 223; that stretch reads PDTPDTIWLV…QLQQRAQAHP (194 aa). Residues 69 to 76, 141 to 143, and 154 to 156 each bind substrate; these read RGGQITYH, ALG, and GVS. Catalysis depends on Cys-172, which acts as the Acyl-thioester intermediate.

It belongs to the LipB family.

It is found in the cytoplasm. The catalysed reaction is octanoyl-[ACP] + L-lysyl-[protein] = N(6)-octanoyl-L-lysyl-[protein] + holo-[ACP] + H(+). The protein operates within protein modification; protein lipoylation via endogenous pathway; protein N(6)-(lipoyl)lysine from octanoyl-[acyl-carrier-protein]: step 1/2. Functionally, catalyzes the transfer of endogenously produced octanoic acid from octanoyl-acyl-carrier-protein onto the lipoyl domains of lipoate-dependent enzymes. Lipoyl-ACP can also act as a substrate although octanoyl-ACP is likely to be the physiological substrate. The sequence is that of Octanoyltransferase from Ralstonia pickettii (strain 12J).